The chain runs to 346 residues: Aspartate-semialdehyde dehydrogenase (346 aa).

NADP(+)-binding positions include 12–15 (SGAV) and 40–41 (RS). Arginine 101 lines the phosphate pocket. The active-site Acyl-thioester intermediate is cysteine 131. Glutamine 158 lines the substrate pocket. 161 to 162 (SG) lines the NADP(+) pocket. Lysine 225 is a binding site for phosphate. Arginine 246 contacts substrate. Histidine 253 functions as the Proton acceptor in the catalytic mechanism. Glutamine 326 provides a ligand contact to NADP(+).

It belongs to the aspartate-semialdehyde dehydrogenase family. As to quaternary structure, homodimer.

The catalysed reaction is L-aspartate 4-semialdehyde + phosphate + NADP(+) = 4-phospho-L-aspartate + NADPH + H(+). The protein operates within amino-acid biosynthesis; L-lysine biosynthesis via DAP pathway; (S)-tetrahydrodipicolinate from L-aspartate: step 2/4. Its pathway is amino-acid biosynthesis; L-methionine biosynthesis via de novo pathway; L-homoserine from L-aspartate: step 2/3. It participates in amino-acid biosynthesis; L-threonine biosynthesis; L-threonine from L-aspartate: step 2/5. Functionally, catalyzes the NADPH-dependent formation of L-aspartate-semialdehyde (L-ASA) by the reductive dephosphorylation of L-aspartyl-4-phosphate. This Helicobacter pylori (strain J99 / ATCC 700824) (Campylobacter pylori J99) protein is Aspartate-semialdehyde dehydrogenase.